A 343-amino-acid chain; its full sequence is Glucokinase (343 aa).

18 to 23 provides a ligand contact to ATP; it reads GDIGGT.

It belongs to the bacterial glucokinase family.

It localises to the cytoplasm. It carries out the reaction D-glucose + ATP = D-glucose 6-phosphate + ADP + H(+). The polypeptide is Glucokinase (Brucella melitensis biotype 1 (strain ATCC 23456 / CCUG 17765 / NCTC 10094 / 16M)).